The chain runs to 439 residues: UPF0597 protein Dalk_4447 (439 aa).

This sequence belongs to the UPF0597 family.

The polypeptide is UPF0597 protein Dalk_4447 (Desulfatibacillum aliphaticivorans).